A 606-amino-acid chain; its full sequence is Pescadillo homolog (606 aa).

Residues Leu346–Gln447 form the BRCT domain. A disordered region spans residues Tyr461–Gly497. The segment covering Gln479–Gln496 has biased composition (acidic residues).

Belongs to the pescadillo family. In terms of assembly, component of the NOP7 complex, composed of ERB1, NOP7 and YTM1. The complex is held together by ERB1, which interacts with NOP7 via its N-terminal domain and with YTM1 via a high-affinity interaction between the seven-bladed beta-propeller domains of the 2 proteins. The NOP7 complex associates with the 66S pre-ribosome.

It localises to the nucleus. The protein localises to the nucleolus. Its subcellular location is the nucleoplasm. In terms of biological role, component of the NOP7 complex, which is required for maturation of the 25S and 5.8S ribosomal RNAs and formation of the 60S ribosome. The sequence is that of Pescadillo homolog from Laccaria bicolor (strain S238N-H82 / ATCC MYA-4686) (Bicoloured deceiver).